We begin with the raw amino-acid sequence, 615 residues long: DNA mismatch repair protein MutL (615 aa).

The disordered stretch occupies residues Phe363–Tyr397. Low complexity predominate over residues Ala364–Pro391.

Belongs to the DNA mismatch repair MutL/HexB family.

In terms of biological role, this protein is involved in the repair of mismatches in DNA. It is required for dam-dependent methyl-directed DNA mismatch repair. May act as a 'molecular matchmaker', a protein that promotes the formation of a stable complex between two or more DNA-binding proteins in an ATP-dependent manner without itself being part of a final effector complex. The polypeptide is DNA mismatch repair protein MutL (Escherichia coli (strain ATCC 8739 / DSM 1576 / NBRC 3972 / NCIMB 8545 / WDCM 00012 / Crooks)).